We begin with the raw amino-acid sequence, 261 residues long: 5'-nucleotidase SurE (261 aa).

Asp18, Asp19, Ser50, and Asn102 together coordinate a divalent metal cation.

It belongs to the SurE nucleotidase family. A divalent metal cation serves as cofactor.

The protein localises to the cytoplasm. The catalysed reaction is a ribonucleoside 5'-phosphate + H2O = a ribonucleoside + phosphate. Functionally, nucleotidase that shows phosphatase activity on nucleoside 5'-monophosphates. In Rhodospirillum rubrum (strain ATCC 11170 / ATH 1.1.1 / DSM 467 / LMG 4362 / NCIMB 8255 / S1), this protein is 5'-nucleotidase SurE.